We begin with the raw amino-acid sequence, 180 residues long: Large ribosomal subunit protein uL6 (180 aa).

The disordered stretch occupies residues 158–180; the sequence is YSGKGISYKGEKIRRKEGKTASK.

This sequence belongs to the universal ribosomal protein uL6 family. Part of the 50S ribosomal subunit.

In terms of biological role, this protein binds to the 23S rRNA, and is important in its secondary structure. It is located near the subunit interface in the base of the L7/L12 stalk, and near the tRNA binding site of the peptidyltransferase center. In Mycoplasmopsis synoviae (strain 53) (Mycoplasma synoviae), this protein is Large ribosomal subunit protein uL6.